The following is a 391-amino-acid chain: Probable tRNA sulfurtransferase (391 aa).

The region spanning 60 to 167 is the THUMP domain; that stretch reads DEIIDHIKKV…KDNCYVYTDR (108 aa). ATP contacts are provided by residues 185-186, 210-211, Arg267, Gly289, and Gln298; these read LL and HF.

It belongs to the ThiI family.

The protein resides in the cytoplasm. The catalysed reaction is [ThiI sulfur-carrier protein]-S-sulfanyl-L-cysteine + a uridine in tRNA + 2 reduced [2Fe-2S]-[ferredoxin] + ATP + H(+) = [ThiI sulfur-carrier protein]-L-cysteine + a 4-thiouridine in tRNA + 2 oxidized [2Fe-2S]-[ferredoxin] + AMP + diphosphate. It carries out the reaction [ThiS sulfur-carrier protein]-C-terminal Gly-Gly-AMP + S-sulfanyl-L-cysteinyl-[cysteine desulfurase] + AH2 = [ThiS sulfur-carrier protein]-C-terminal-Gly-aminoethanethioate + L-cysteinyl-[cysteine desulfurase] + A + AMP + 2 H(+). It functions in the pathway cofactor biosynthesis; thiamine diphosphate biosynthesis. Catalyzes the ATP-dependent transfer of a sulfur to tRNA to produce 4-thiouridine in position 8 of tRNAs, which functions as a near-UV photosensor. Also catalyzes the transfer of sulfur to the sulfur carrier protein ThiS, forming ThiS-thiocarboxylate. This is a step in the synthesis of thiazole, in the thiamine biosynthesis pathway. The sulfur is donated as persulfide by IscS. The protein is Probable tRNA sulfurtransferase of Finegoldia magna (strain ATCC 29328 / DSM 20472 / WAL 2508) (Peptostreptococcus magnus).